The chain runs to 234 residues: Segregation and condensation protein A (234 aa).

This sequence belongs to the ScpA family. In terms of assembly, component of a cohesin-like complex composed of ScpA, ScpB and the Smc homodimer, in which ScpA and ScpB bind to the head domain of Smc. The presence of the three proteins is required for the association of the complex with DNA.

Its subcellular location is the cytoplasm. In terms of biological role, participates in chromosomal partition during cell division. May act via the formation of a condensin-like complex containing Smc and ScpB that pull DNA away from mid-cell into both cell halves. In Streptococcus pyogenes serotype M5 (strain Manfredo), this protein is Segregation and condensation protein A.